Reading from the N-terminus, the 450-residue chain is Tubulin alpha chain (450 aa).

Gln11 provides a ligand contact to GTP. At Lys40 the chain carries N6-acetyllysine. GTP contacts are provided by Glu71, Ser140, Gly144, Thr145, Thr179, Asn206, and Asn228. Glu71 serves as a coordination point for Mg(2+). Residue Glu254 is part of the active site.

Belongs to the tubulin family. As to quaternary structure, dimer of alpha and beta chains. A typical microtubule is a hollow water-filled tube with an outer diameter of 25 nm and an inner diameter of 15 nM. Alpha-beta heterodimers associate head-to-tail to form protofilaments running lengthwise along the microtubule wall with the beta-tubulin subunit facing the microtubule plus end conferring a structural polarity. Microtubules usually have 13 protofilaments but different protofilament numbers can be found in some organisms and specialized cells. Mg(2+) is required as a cofactor. In terms of processing, undergoes a tyrosination/detyrosination cycle, the cyclic removal and re-addition of a C-terminal tyrosine residue by the enzymes tubulin tyrosine carboxypeptidase (TTCP) and tubulin tyrosine ligase (TTL), respectively. Acetylation of alpha chains at Lys-40 stabilizes microtubules and affects affinity and processivity of microtubule motors. This modification has a role in multiple cellular functions, ranging from cell motility, cell cycle progression or cell differentiation to intracellular trafficking and signaling.

It is found in the cytoplasm. It localises to the cytoskeleton. The enzyme catalyses GTP + H2O = GDP + phosphate + H(+). In terms of biological role, tubulin is the major constituent of microtubules, a cylinder consisting of laterally associated linear protofilaments composed of alpha- and beta-tubulin heterodimers. Microtubules grow by the addition of GTP-tubulin dimers to the microtubule end, where a stabilizing cap forms. Below the cap, tubulin dimers are in GDP-bound state, owing to GTPase activity of alpha-tubulin. This Haemonchus contortus (Barber pole worm) protein is Tubulin alpha chain.